Here is a 334-residue protein sequence, read N- to C-terminus: GTP 3',8-cyclase (334 aa).

In terms of domain architecture, Radical SAM core spans 13–239 (RFHRKFYYLR…KVKAANDGPA (227 aa)). GTP is bound at residue Arg-22. Residues Cys-29 and Cys-33 each coordinate [4Fe-4S] cluster. Tyr-35 lines the S-adenosyl-L-methionine pocket. Cys-36 serves as a coordination point for [4Fe-4S] cluster. GTP is bound at residue Arg-73. Gly-77 contacts S-adenosyl-L-methionine. Thr-104 is a GTP binding site. S-adenosyl-L-methionine is bound at residue Ser-128. A GTP-binding site is contributed by Lys-165. Met-199 contacts S-adenosyl-L-methionine. [4Fe-4S] cluster-binding residues include Cys-262 and Cys-265. 267–269 (RLR) serves as a coordination point for GTP. Residue Cys-279 participates in [4Fe-4S] cluster binding.

It belongs to the radical SAM superfamily. MoaA family. In terms of assembly, monomer and homodimer. It depends on [4Fe-4S] cluster as a cofactor.

It carries out the reaction GTP + AH2 + S-adenosyl-L-methionine = (8S)-3',8-cyclo-7,8-dihydroguanosine 5'-triphosphate + 5'-deoxyadenosine + L-methionine + A + H(+). It participates in cofactor biosynthesis; molybdopterin biosynthesis. In terms of biological role, catalyzes the cyclization of GTP to (8S)-3',8-cyclo-7,8-dihydroguanosine 5'-triphosphate. This chain is GTP 3',8-cyclase, found in Vibrio vulnificus (strain YJ016).